Reading from the N-terminus, the 505-residue chain is Trans-cinnamate 4-monooxygenase (505 aa).

Residues 3–23 (LLLLEKTLLGSFVAVLVAILV) form a helical membrane-spanning segment. Residues 213-218 (RSRLAQ) and A306 contribute to the (E)-cinnamate site. Heme is bound at residue C447.

It belongs to the cytochrome P450 family. Heme serves as cofactor.

The protein resides in the membrane. The enzyme catalyses (E)-cinnamate + reduced [NADPH--hemoprotein reductase] + O2 = (E)-4-coumarate + oxidized [NADPH--hemoprotein reductase] + H2O + H(+). The protein operates within phenylpropanoid metabolism; trans-4-coumarate biosynthesis; trans-4-coumarate from trans-cinnamate: step 1/1. Its function is as follows. Catalyzes the first oxidative step of the phenylpropanoid pathway in higher plants by transforming trans-cinnamate into p-coumarate. The compounds formed by this pathway are essential components for lignification, pollination, and defense against ultraviolet light, predators and pathogens. The polypeptide is Trans-cinnamate 4-monooxygenase (CYP73A16) (Populus kitakamiensis (Aspen)).